The sequence spans 405 residues: Secreted aspartic protease FUS4 (405 aa).

The first 24 residues, 1–24 (MLAIATLHVALQVFGAFSLSHAAA), serve as a signal peptide directing secretion. One can recognise a Peptidase A1 domain in the interval 49–400 (YLFNVTVGSP…NFEERSFGLA (352 aa)). Asn52, Asn61, Asn107, and Asn123 each carry an N-linked (GlcNAc...) asparagine glycan. A disulfide bridge connects residues Cys318 and Cys356.

Belongs to the peptidase A1 family.

The protein resides in the secreted. Functionally, secreted aspartic protease; part of the gene cluster that mediates the biosynthesis of the mycotoxin fusarin C. Within the cluster, FUS1, FUS2, FUS8 and FUS9 are sufficient for fusarin production. The other FUS cluster members are not essential for fusarin C biosynthesis. This chain is Secreted aspartic protease FUS4, found in Gibberella fujikuroi (strain CBS 195.34 / IMI 58289 / NRRL A-6831) (Bakanae and foot rot disease fungus).